The sequence spans 387 residues: MTHTRVISTWTELTRDLAIYLLFTFFAIKVFKFLFSCNRTSEISSFSMATHPEALRRERILNSKLYFDVPLSKVSIIYSSSYDISFMGIEKLHPFDSSKWGRVCKFLVSDGFLEEKAIVEPLEASKIDLLVVHSENYLNSLKSSATVARITEVAPVAFFPNFLVQQKVLYPFRKQVGGTILAAKLATERGWAINIGGGFHHCTAERGGGFCAFADISLCIHFAFLRLRISRVMIIDLDAHQGNGHETDLGDDNRVYILDMYNPEIYPFDYRARRFIDQKVEVMSGTTTDEYLRKLDEALEVASRNFQPELVIYNAGTDILDGDPLGLLKISPDGITSRDEKVFRFAREKNIPLVMLTSGGYMKSSARVIADSIENLSRQGLIQTRPE.

The histone deacetylase stretch occupies residues 73-382 (KVSIIYSSSY…IENLSRQGLI (310 aa)). Catalysis depends on H201, which acts as the Proton donor/acceptor. 3 residues coordinate Zn(2+): D238, H240, and D318.

Belongs to the histone deacetylase family. HD type 3 subfamily. The cofactor is Zn(2+).

The protein resides in the nucleus. The catalysed reaction is N(6)-acetyl-L-lysyl-[histone] + H2O = L-lysyl-[histone] + acetate. In terms of biological role, responsible for the deacetylation of lysine residues on the N-terminal part of the core histones (H2A, H2B, H3 and H4). Histone deacetylation gives a tag for epigenetic repression and plays an important role in transcriptional regulation, cell cycle progression and developmental events. Histone deacetylases act via the formation of large multiprotein complexes. The chain is Histone deacetylase 2 (HDA2) from Arabidopsis thaliana (Mouse-ear cress).